The following is a 408-amino-acid chain: Imidazolonepropionase (408 aa).

The Fe(3+) site is built by H72 and H74. Positions 72 and 74 each coordinate Zn(2+). Positions 81, 144, and 177 each coordinate 4-imidazolone-5-propanoate. An N-formimidoyl-L-glutamate-binding site is contributed by Y144. A Fe(3+)-binding site is contributed by H242. Residue H242 participates in Zn(2+) binding. Position 245 (Q245) interacts with 4-imidazolone-5-propanoate. Position 317 (D317) interacts with Fe(3+). D317 lines the Zn(2+) pocket. Residues N319 and G321 each coordinate N-formimidoyl-L-glutamate. Position 322 (T322) interacts with 4-imidazolone-5-propanoate.

The protein belongs to the metallo-dependent hydrolases superfamily. HutI family. It depends on Zn(2+) as a cofactor. The cofactor is Fe(3+).

The protein resides in the cytoplasm. It catalyses the reaction 4-imidazolone-5-propanoate + H2O = N-formimidoyl-L-glutamate. It functions in the pathway amino-acid degradation; L-histidine degradation into L-glutamate; N-formimidoyl-L-glutamate from L-histidine: step 3/3. Catalyzes the hydrolytic cleavage of the carbon-nitrogen bond in imidazolone-5-propanoate to yield N-formimidoyl-L-glutamate. It is the third step in the universal histidine degradation pathway. The sequence is that of Imidazolonepropionase from Aliivibrio fischeri (strain MJ11) (Vibrio fischeri).